A 160-amino-acid polypeptide reads, in one-letter code: Cytochrome c-type biogenesis protein CcmE (160 aa).

The Cytoplasmic portion of the chain corresponds to 1 to 8 (MSAPRKTR). Residues 9 to 29 (LYAILAVVCGAVLTIALMLYA) form a helical; Signal-anchor for type II membrane protein membrane-spanning segment. Residues 30–160 (LSSNIDLFYT…PAAGPEGKRL (131 aa)) lie on the Periplasmic side of the membrane. Residues His130 and Tyr134 each coordinate heme.

The protein belongs to the CcmE/CycJ family.

It is found in the cell inner membrane. Its function is as follows. Heme chaperone required for the biogenesis of c-type cytochromes. Transiently binds heme delivered by CcmC and transfers the heme to apo-cytochromes in a process facilitated by CcmF and CcmH. This chain is Cytochrome c-type biogenesis protein CcmE, found in Pectobacterium atrosepticum (strain SCRI 1043 / ATCC BAA-672) (Erwinia carotovora subsp. atroseptica).